The sequence spans 241 residues: Probable 2-phosphosulfolactate phosphatase (241 aa).

The protein belongs to the ComB family. The cofactor is Mg(2+).

It catalyses the reaction (2R)-O-phospho-3-sulfolactate + H2O = (2R)-3-sulfolactate + phosphate. In Microcystis aeruginosa (strain NIES-843 / IAM M-2473), this protein is Probable 2-phosphosulfolactate phosphatase.